The primary structure comprises 72 residues: Translation initiation factor IF-1 (72 aa).

Positions 1–72 (MSKDDSIEFE…TKGRITYRMK (72 aa)) constitute an S1-like domain.

The protein belongs to the IF-1 family. In terms of assembly, component of the 30S ribosomal translation pre-initiation complex which assembles on the 30S ribosome in the order IF-2 and IF-3, IF-1 and N-formylmethionyl-tRNA(fMet); mRNA recruitment can occur at any time during PIC assembly.

Its subcellular location is the cytoplasm. Functionally, one of the essential components for the initiation of protein synthesis. Stabilizes the binding of IF-2 and IF-3 on the 30S subunit to which N-formylmethionyl-tRNA(fMet) subsequently binds. Helps modulate mRNA selection, yielding the 30S pre-initiation complex (PIC). Upon addition of the 50S ribosomal subunit IF-1, IF-2 and IF-3 are released leaving the mature 70S translation initiation complex. This Xanthomonas campestris pv. campestris (strain 8004) protein is Translation initiation factor IF-1.